The primary structure comprises 905 residues: A disintegrin and metalloproteinase with thrombospondin motifs 8 (905 aa).

Positions 1–28 (MLRDPTTTGWPPLLLLLLQLPPPPLVCG) are cleaved as a signal peptide. Residues 29 to 228 (APAGPGTGAQ…PFGSKTRSKR (200 aa)) constitute a propeptide that is removed on maturation. Disordered stretches follow at residues 139–163 (PQGAGDSLDQPHRLQRWGPGQRRED) and 186–225 (NGQGQERSDNEEDRKQDKEGLLKETEDSRKVPPPFGSKTR). A compositionally biased stretch (basic and acidic residues) spans 191 to 215 (ERSDNEEDRKQDKEGLLKETEDSRK). In terms of domain architecture, Peptidase M12B spans 234–444 (RFVETLLVAD…GHGDCLLDAP (211 aa)). Cystine bridges form between Cys309/Cys362, Cys338/Cys344, Cys356/Cys439, Cys394/Cys423, Cys478/Cys502, Cys487/Cys523, Cys517/Cys528, Cys554/Cys591, Cys558/Cys596, and Cys569/Cys581. His378 is a binding site for Zn(2+). Glu379 is a catalytic residue. Zn(2+) is bound by residues His382 and His388. 3 N-linked (GlcNAc...) asparagine glycosylation sites follow: Asn415, Asn480, and Asn506. One can recognise a Disintegrin domain in the interval 453–541 (GLPGHSTLYE…EDVENPKAVV (89 aa)). The TSP type-1 1 domain occupies 542 to 597 (DGDWGPWRPWGQCSRTCGGGIQFSNRECDNPMPQNGGRFCLGERVKYQSCNTEECP). The N-linked (GlcNAc...) asparagine glycan is linked to Asn615. Residues 706-847 (RKISGSFTPF…RATTNIIQSL (142 aa)) are spacer. The region spanning 848–904 (PSAEWVLGDWSECPSTCRGSWQRRTVECRDPSGQASDTCDEALKPEDAKPCGSQPCP) is the TSP type-1 2 domain. A disordered region spans residues 877 to 905 (DPSGQASDTCDEALKPEDAKPCGSQPCPL).

Requires Zn(2+) as cofactor. In terms of processing, the precursor is cleaved by a furin endopeptidase. Post-translationally, glycosylated. Can be O-fucosylated by POFUT2 on a serine or a threonine residue found within the consensus sequence C1-X(2)-(S/T)-C2-G of the TSP type-1 repeat domains where C1 and C2 are the first and second cysteine residue of the repeat, respectively. Fucosylated repeats can then be further glycosylated by the addition of a beta-1,3-glucose residue by the glucosyltransferase, B3GALTL. Fucosylation mediates the efficient secretion of ADAMTS family members. Can also be C-glycosylated with one or two mannose molecules on tryptophan residues within the consensus sequence W-X-X-W of the TPRs, and N-glycosylated. These other glycosylations can also facilitate secretion. Expressed specifically in adult lung and heart and low expression during mouse development.

It localises to the secreted. The protein resides in the extracellular space. The protein localises to the extracellular matrix. In terms of biological role, has anti-angiogenic properties. The sequence is that of A disintegrin and metalloproteinase with thrombospondin motifs 8 (Adamts8) from Mus musculus (Mouse).